We begin with the raw amino-acid sequence, 400 residues long: MSRKLLLALTFLVVLGIAVVVMAATYELFLLFNSWLEGKPLGIVKISVETPKADGICFIAVHRFFTPINPTKAWNQTDVIYRGKVKCGESVVVKDTIRLMQVGARDVNGEVMPIYDSPEYAVVVVSKSGGFNRIIQTDIVKPITEVKVKAEFESGESARPAEAPSTSRTCKISSNPDACVLDVKLAYINSIPGLKTAFGLEGVRPSAMHVEGWGSSCISSEPDTACPPSAWRSGGKKLTISNVGEISDYVSDGQRAIVWGGVEYLYERHAVWDDEFEAYWKYEFFYPRAIGGLSTPQVVGSYTPPPTPPSYAAGPQNGSCEINFEKPYPSDTKLNLTAQAVLNIGEVSLSISISPYQSGDDRHPTPYLSIVDISGKGYPWYYWWYKNNDRMTYEVEFYGS.

A signal peptide spans 1–23 (MSRKLLLALTFLVVLGIAVVVMA).

This is an uncharacterized protein from Archaeoglobus fulgidus (strain ATCC 49558 / DSM 4304 / JCM 9628 / NBRC 100126 / VC-16).